The following is a 245-amino-acid chain: Uridylate kinase (245 aa).

18-21 (KLSG) lines the ATP pocket. Position 60 (Gly60) interacts with UMP. 2 residues coordinate ATP: Gly61 and Arg65. Residues Asp80 and 141 to 148 (TGNPFFTT) each bind UMP. ATP-binding residues include Thr168, Tyr174, and Asp177.

Belongs to the UMP kinase family. Homohexamer.

The protein localises to the cytoplasm. The enzyme catalyses UMP + ATP = UDP + ADP. Its pathway is pyrimidine metabolism; CTP biosynthesis via de novo pathway; UDP from UMP (UMPK route): step 1/1. Its activity is regulated as follows. Inhibited by UTP. Its function is as follows. Catalyzes the reversible phosphorylation of UMP to UDP. The chain is Uridylate kinase from Pseudomonas paraeruginosa (strain DSM 24068 / PA7) (Pseudomonas aeruginosa (strain PA7)).